The primary structure comprises 235 residues: tRNA pseudouridine synthase B (235 aa).

Asp45 serves as the catalytic Nucleophile.

Belongs to the pseudouridine synthase TruB family. Type 1 subfamily.

It carries out the reaction uridine(55) in tRNA = pseudouridine(55) in tRNA. In terms of biological role, responsible for synthesis of pseudouridine from uracil-55 in the psi GC loop of transfer RNAs. This is tRNA pseudouridine synthase B from Chlamydia abortus (strain DSM 27085 / S26/3) (Chlamydophila abortus).